We begin with the raw amino-acid sequence, 441 residues long: Glutamate-1-semialdehyde 2,1-aminomutase (441 aa).

An N6-(pyridoxal phosphate)lysine modification is found at Lys275.

This sequence belongs to the class-III pyridoxal-phosphate-dependent aminotransferase family. HemL subfamily. As to quaternary structure, homodimer. Pyridoxal 5'-phosphate serves as cofactor.

It localises to the cytoplasm. It carries out the reaction (S)-4-amino-5-oxopentanoate = 5-aminolevulinate. The protein operates within porphyrin-containing compound metabolism; protoporphyrin-IX biosynthesis; 5-aminolevulinate from L-glutamyl-tRNA(Glu): step 2/2. This Deinococcus deserti (strain DSM 17065 / CIP 109153 / LMG 22923 / VCD115) protein is Glutamate-1-semialdehyde 2,1-aminomutase.